Consider the following 393-residue polypeptide: CCA-adding enzyme (393 aa).

ATP contacts are provided by glycine 27 and arginine 30. Residues glycine 27 and arginine 30 each contribute to the CTP site. Mg(2+)-binding residues include aspartate 40 and aspartate 42. ATP is bound by residues arginine 111, aspartate 154, arginine 157, arginine 160, and arginine 163. CTP is bound by residues arginine 111, aspartate 154, arginine 157, arginine 160, and arginine 163.

Belongs to the tRNA nucleotidyltransferase/poly(A) polymerase family. Bacterial CCA-adding enzyme type 3 subfamily. In terms of assembly, homodimer. It depends on Mg(2+) as a cofactor.

The enzyme catalyses a tRNA precursor + 2 CTP + ATP = a tRNA with a 3' CCA end + 3 diphosphate. It catalyses the reaction a tRNA with a 3' CCA end + 2 CTP + ATP = a tRNA with a 3' CCACCA end + 3 diphosphate. Its function is as follows. Catalyzes the addition and repair of the essential 3'-terminal CCA sequence in tRNAs without using a nucleic acid template. Adds these three nucleotides in the order of C, C, and A to the tRNA nucleotide-73, using CTP and ATP as substrates and producing inorganic pyrophosphate. tRNA 3'-terminal CCA addition is required both for tRNA processing and repair. Also involved in tRNA surveillance by mediating tandem CCA addition to generate a CCACCA at the 3' terminus of unstable tRNAs. While stable tRNAs receive only 3'-terminal CCA, unstable tRNAs are marked with CCACCA and rapidly degraded. This Listeria monocytogenes serotype 4a (strain HCC23) protein is CCA-adding enzyme.